The sequence spans 154 residues: MFSQHNGAAVHGLRLQSLLIAAMLTAAMAMVTPTGSGHQLLPPGNHKLCGPALSDAMDVVCPHGFNTLPRKRESLLGNSDDDEDTEQEVQDDSSMWQTLDGAGYSFSPLLTNLYGSEVLIKMRRHRRHLTGGVYDECCVKTCSYLELAIYCLPK.

The first 29 residues, 1–29, serve as a signal peptide directing secretion; it reads MFSQHNGAAVHGLRLQSLLIAAMLTAAMA. Cystine bridges form between C49–C138, C61–C151, and C137–C142. The interval 72-92 is disordered; the sequence is RESLLGNSDDDEDTEQEVQDD. A propeptide spans 73–122 (connecting peptide); it reads ESLLGNSDDDEDTEQEVQDDSSMWQTLDGAGYSFSPLLTNLYGSEVLIKM. Acidic residues predominate over residues 79–91; it reads SDDDEDTEQEVQD.

Belongs to the insulin family. As to quaternary structure, heterodimer of a B chain and an A chain linked by two disulfide bonds.

It localises to the secreted. Functionally, possible ligand of InR/insulin-like receptor. This Drosophila melanogaster (Fruit fly) protein is Insulin-like peptide 1.